A 378-amino-acid chain; its full sequence is UDP-N-acetylglucosamine--N-acetylmuramyl-(pentapeptide) pyrophosphoryl-undecaprenol N-acetylglucosamine transferase (378 aa).

Residues 14–16, Asn-125, Arg-165, Ser-193, and Gln-293 contribute to the UDP-N-acetyl-alpha-D-glucosamine site; that span reads TGG.

This sequence belongs to the glycosyltransferase 28 family. MurG subfamily.

The protein localises to the cell inner membrane. The catalysed reaction is di-trans,octa-cis-undecaprenyl diphospho-N-acetyl-alpha-D-muramoyl-L-alanyl-D-glutamyl-meso-2,6-diaminopimeloyl-D-alanyl-D-alanine + UDP-N-acetyl-alpha-D-glucosamine = di-trans,octa-cis-undecaprenyl diphospho-[N-acetyl-alpha-D-glucosaminyl-(1-&gt;4)]-N-acetyl-alpha-D-muramoyl-L-alanyl-D-glutamyl-meso-2,6-diaminopimeloyl-D-alanyl-D-alanine + UDP + H(+). It functions in the pathway cell wall biogenesis; peptidoglycan biosynthesis. Functionally, cell wall formation. Catalyzes the transfer of a GlcNAc subunit on undecaprenyl-pyrophosphoryl-MurNAc-pentapeptide (lipid intermediate I) to form undecaprenyl-pyrophosphoryl-MurNAc-(pentapeptide)GlcNAc (lipid intermediate II). The polypeptide is UDP-N-acetylglucosamine--N-acetylmuramyl-(pentapeptide) pyrophosphoryl-undecaprenol N-acetylglucosamine transferase (Bartonella henselae (strain ATCC 49882 / DSM 28221 / CCUG 30454 / Houston 1) (Rochalimaea henselae)).